The sequence spans 39 residues: Photosystem II reaction center protein J (39 aa).

A helical membrane pass occupies residues 7–27 (IPLWIVATVAGTGVLVVVGLF).

This sequence belongs to the PsbJ family. PSII is composed of 1 copy each of membrane proteins PsbA, PsbB, PsbC, PsbD, PsbE, PsbF, PsbH, PsbI, PsbJ, PsbK, PsbL, PsbM, PsbT, PsbX, PsbY, PsbZ, Psb30/Ycf12, peripheral proteins PsbO, CyanoQ (PsbQ), PsbU, PsbV and a large number of cofactors. It forms dimeric complexes.

The protein resides in the cellular thylakoid membrane. In terms of biological role, one of the components of the core complex of photosystem II (PSII). PSII is a light-driven water:plastoquinone oxidoreductase that uses light energy to abstract electrons from H(2)O, generating O(2) and a proton gradient subsequently used for ATP formation. It consists of a core antenna complex that captures photons, and an electron transfer chain that converts photonic excitation into a charge separation. In Synechococcus elongatus (strain ATCC 33912 / PCC 7942 / FACHB-805) (Anacystis nidulans R2), this protein is Photosystem II reaction center protein J.